The following is a 289-amino-acid chain: Iron-sulfur cluster carrier protein (289 aa).

Low complexity predominate over residues 1–18; the sequence is MAEECSGNCDSCGSSSDC. The tract at residues 1 to 20 is disordered; the sequence is MAEECSGNCDSCGSSSDCSD. 48–55 provides a ligand contact to ATP; the sequence is GKGGVGKS.

The protein belongs to the Mrp/NBP35 ATP-binding proteins family. As to quaternary structure, homodimer.

Binds and transfers iron-sulfur (Fe-S) clusters to target apoproteins. Can hydrolyze ATP. The polypeptide is Iron-sulfur cluster carrier protein (Methanococcus maripaludis (strain DSM 14266 / JCM 13030 / NBRC 101832 / S2 / LL)).